A 194-amino-acid polypeptide reads, in one-letter code: NADH-quinone oxidoreductase subunit B (194 aa).

Cys73, Cys74, Cys138, and Cys168 together coordinate [4Fe-4S] cluster.

This sequence belongs to the complex I 20 kDa subunit family. In terms of assembly, NDH-1 is composed of 14 different subunits. Subunits NuoB, C, D, E, F, and G constitute the peripheral sector of the complex. [4Fe-4S] cluster is required as a cofactor.

The protein resides in the cell inner membrane. The catalysed reaction is a quinone + NADH + 5 H(+)(in) = a quinol + NAD(+) + 4 H(+)(out). In terms of biological role, NDH-1 shuttles electrons from NADH, via FMN and iron-sulfur (Fe-S) centers, to quinones in the respiratory chain. The immediate electron acceptor for the enzyme in this species is believed to be ubiquinone. Couples the redox reaction to proton translocation (for every two electrons transferred, four hydrogen ions are translocated across the cytoplasmic membrane), and thus conserves the redox energy in a proton gradient. The chain is NADH-quinone oxidoreductase subunit B from Bradyrhizobium sp. (strain BTAi1 / ATCC BAA-1182).